Here is a 134-residue protein sequence, read N- to C-terminus: NADPH-dependent 7-cyano-7-deazaguanine reductase (134 aa).

Cysteine 48 serves as the catalytic Thioimide intermediate. The active-site Proton donor is the aspartate 55. Substrate-binding positions include 70–72 (VEL) and 89–90 (QE).

The protein belongs to the GTP cyclohydrolase I family. QueF type 1 subfamily.

It localises to the cytoplasm. The catalysed reaction is 7-aminomethyl-7-carbaguanine + 2 NADP(+) = 7-cyano-7-deazaguanine + 2 NADPH + 3 H(+). It functions in the pathway tRNA modification; tRNA-queuosine biosynthesis. Its function is as follows. Catalyzes the NADPH-dependent reduction of 7-cyano-7-deazaguanine (preQ0) to 7-aminomethyl-7-deazaguanine (preQ1). The polypeptide is NADPH-dependent 7-cyano-7-deazaguanine reductase (Caldanaerobacter subterraneus subsp. tengcongensis (strain DSM 15242 / JCM 11007 / NBRC 100824 / MB4) (Thermoanaerobacter tengcongensis)).